The chain runs to 168 residues: Regulatory protein RecX (168 aa).

This sequence belongs to the RecX family.

It is found in the cytoplasm. In terms of biological role, modulates RecA activity. The polypeptide is Regulatory protein RecX (Serratia proteamaculans (strain 568)).